The primary structure comprises 157 residues: Peptide methionine sulfoxide reductase MsrA (157 aa).

Residue C10 is part of the active site.

It belongs to the MsrA Met sulfoxide reductase family.

It carries out the reaction L-methionyl-[protein] + [thioredoxin]-disulfide + H2O = L-methionyl-(S)-S-oxide-[protein] + [thioredoxin]-dithiol. The enzyme catalyses [thioredoxin]-disulfide + L-methionine + H2O = L-methionine (S)-S-oxide + [thioredoxin]-dithiol. Has an important function as a repair enzyme for proteins that have been inactivated by oxidation. Catalyzes the reversible oxidation-reduction of methionine sulfoxide in proteins to methionine. This Clostridium botulinum (strain Kyoto / Type A2) protein is Peptide methionine sulfoxide reductase MsrA.